A 238-amino-acid chain; its full sequence is 6-phosphogluconolactonase (238 aa).

It belongs to the glucosamine/galactosamine-6-phosphate isomerase family. 6-phosphogluconolactonase subfamily.

The catalysed reaction is 6-phospho-D-glucono-1,5-lactone + H2O = 6-phospho-D-gluconate + H(+). Its pathway is carbohydrate degradation; pentose phosphate pathway; D-ribulose 5-phosphate from D-glucose 6-phosphate (oxidative stage): step 2/3. Its function is as follows. Hydrolysis of 6-phosphogluconolactone to 6-phosphogluconate. In Mesorhizobium japonicum (strain LMG 29417 / CECT 9101 / MAFF 303099) (Mesorhizobium loti (strain MAFF 303099)), this protein is 6-phosphogluconolactonase (pgl).